A 166-amino-acid polypeptide reads, in one-letter code: Interferon gamma (166 aa).

A signal peptide spans methionine 1–cysteine 23. Glutamine 24 is modified (pyrrolidone carboxylic acid). Asparagine 39, asparagine 106, and asparagine 107 each carry an N-linked (GlcNAc...) asparagine glycan.

This sequence belongs to the type II (or gamma) interferon family. In terms of assembly, homodimer. Interacts with IFNGR1 (via extracellular domain); this interaction promotes IFNGR1 dimerization.

Its subcellular location is the secreted. Functionally, type II interferon produced by immune cells such as T-cells and NK cells that plays crucial roles in antimicrobial, antiviral, and antitumor responses by activating effector immune cells and enhancing antigen presentation. Primarily signals through the JAK-STAT pathway after interaction with its receptor IFNGR1 to affect gene regulation. Upon IFNG binding, IFNGR1 intracellular domain opens out to allow association of downstream signaling components JAK2, JAK1 and STAT1, leading to STAT1 activation, nuclear translocation and transcription of IFNG-regulated genes. Many of the induced genes are transcription factors such as IRF1 that are able to further drive regulation of a next wave of transcription. Plays a role in class I antigen presentation pathway by inducing a replacement of catalytic proteasome subunits with immunoproteasome subunits. In turn, increases the quantity, quality, and repertoire of peptides for class I MHC loading. Increases the efficiency of peptide generation also by inducing the expression of activator PA28 that associates with the proteasome and alters its proteolytic cleavage preference. Up-regulates as well MHC II complexes on the cell surface by promoting expression of several key molecules such as cathepsins B/CTSB, H/CTSH, and L/CTSL. Participates in the regulation of hematopoietic stem cells during development and under homeostatic conditions by affecting their development, quiescence, and differentiation. This Mustela putorius furo (European domestic ferret) protein is Interferon gamma (IFNG).